Here is a 520-residue protein sequence, read N- to C-terminus: MTEISMLNDIQKIIVLDYGSQYNQLIARRIREFGVFSELKSHHITAQELRDINPIGIVLSGGPNSVYATDAFGIDPEIFELGIPILGICYGMQLITHTLGGKVVPAGQAGHREYGQSSLRLRSASALFAGTPDEQLVLMSHGDAVTEIPEGFHLVGDSNDCPYAAMENTKKRLYGIQFHPEVRHSVYGNDILKNFAISICGGRGDWSMDNFIDMQIAKIRETVGDRKVLLGLSGGVDSSVVGVLLQKAIGDQLTCIFVDHGLLRKNEGDQVMEMLGGRFGLNIIRVDASKRFLDLLAGVEDPEKKRKIIGNEFVYVFDDEASKLKGVDFLAQGTLYTDIIESGTETAQTIKSHHNVGGLPEDMQFELIEPLNTLFKDEVRALGTALGMPDEVVWRQPFPGPGLAIRVMGEITAEKLETVRESDAILREEIAKAGLERDVWQYFTVNTGVRSVGVMGDGRTYDYTIAIRAITSIDGMTADFAQLPWEVLKKISVRIVNEVDHVNRIVYDITSKPPATVEWE.

The Glutamine amidotransferase type-1 domain occupies 12 to 205; that stretch reads KIIVLDYGSQ…AISICGGRGD (194 aa). Cys89 functions as the Nucleophile in the catalytic mechanism. Catalysis depends on residues His179 and Glu181. Residues 206-395 enclose the GMPS ATP-PPase domain; sequence WSMDNFIDMQ…LGMPDEVVWR (190 aa). An ATP-binding site is contributed by 233 to 239; sequence SGGVDSS.

As to quaternary structure, homodimer.

It catalyses the reaction XMP + L-glutamine + ATP + H2O = GMP + L-glutamate + AMP + diphosphate + 2 H(+). It participates in purine metabolism; GMP biosynthesis; GMP from XMP (L-Gln route): step 1/1. Its function is as follows. Catalyzes the synthesis of GMP from XMP. This is GMP synthase [glutamine-hydrolyzing] from Streptococcus equi subsp. equi (strain 4047).